Here is a 1033-residue protein sequence, read N- to C-terminus: Potassium-transporting ATPase alpha chain 1 (1033 aa).

Residues 1-96 (MGKENYELYS…NALRPPRGTP (96 aa)) are Cytoplasmic-facing. A phosphotyrosine mark is found at tyrosine 6 and tyrosine 9. The tract at residues 14-39 (GTGPGGDMAAKMSKKKAGGGGGKKKE) is disordered. Over residues 25-38 (MSKKKAGGGGGKKK) the composition is skewed to basic residues. At serine 26 the chain carries Phosphoserine. A helical transmembrane segment spans residues 97-117 (EYVKFARQLAGGLQCLMWVAA). At 118-140 (AICLIAFAIQASEGDLTTDDNLY) the chain is on the lumenal side. Residues 141–161 (LALALIAVVVVTGCFGYYQEF) traverse the membrane as a helical segment. The Cytoplasmic portion of the chain corresponds to 162 to 297 (KSTNIIASFK…NEKTPIAIEI (136 aa)). Residues 298 to 317 (EHFVDIIAGLAILFGATFFV) traverse the membrane as a helical segment. The Lumenal segment spans residues 318–329 (VAMCIGYTFLRA). The chain crosses the membrane as a helical span at residues 330 to 347 (MVFFMAIVVAYVPEGLLA). 4 residues coordinate K(+): valine 338, alanine 339, valine 341, and glutamate 343. Over 348-781 (TVTVCLSLTA…EQGRLIFDNL (434 aa)) the chain is Cytoplasmic. Residue aspartate 385 is the 4-aspartylphosphate intermediate of the active site. Residues aspartate 385 and threonine 387 each contribute to the Mg(2+) site. A phosphoserine mark is found at serine 461 and serine 599. Mg(2+) contacts are provided by aspartate 726 and aspartate 730. A helical transmembrane segment spans residues 782–801 (KKSIAYTLTKNIPELTPYLI). A K(+)-binding site is contributed by glutamate 795. Residues 802–811 (YITVSVPLPL) lie on the Lumenal side of the membrane. A helical transmembrane segment spans residues 812–832 (GCITILFIELCTDIFPSVSLA). Glutamate 820 contributes to the K(+) binding site. The Cytoplasmic portion of the chain corresponds to 833–852 (YEKAESDIMHLRPRNPRRDR). A Phosphoserine modification is found at serine 838. The chain crosses the membrane as a helical span at residues 853-875 (LVNEPLAAYSYFQIGAIQSFAGF). Over 876-927 (ADYFTAMAQEGWFPLLCVGLRPQWEDHHLQDLQDSYGQEWTFGQRLYQQYTC) the chain is Lumenal. The chain crosses the membrane as a helical span at residues 928-947 (YTVFFISIEMCQIADVLIRK). Residues 948-961 (TRRLSAFQQGFFRN) are Cytoplasmic-facing. The residue at position 952 (serine 952) is a Phosphoserine; by PKA. Residues 962 to 980 (RILVIAIVFQVCIGCFLCY) form a helical membrane-spanning segment. Over 981–995 (CPGMPNIFNFMPIRF) the chain is Lumenal. Residues 996-1016 (QWWLVPMPFGLLIFVYDEIRK) form a helical membrane-spanning segment. The Cytoplasmic segment spans residues 1017-1033 (LGVRCCPGSWWDQELYY).

It belongs to the cation transport ATPase (P-type) (TC 3.A.3) family. Type IIC subfamily. The gastric H(+)/K(+) ATPase pump is composed of the catalytic alpha subunit ATP4A and the regulatory beta subunit ATP4B. Interacts (via the P-domain) with ATP4B (via N-terminus); this interaction stabilizes the lumenal-open E2 conformation state and prevents the reverse reaction of the transport cycle.

The protein resides in the apical cell membrane. It carries out the reaction K(+)(out) + ATP + H2O + H(+)(in) = K(+)(in) + ADP + phosphate + 2 H(+)(out). Functionally, the catalytic subunit of the gastric H(+)/K(+) ATPase pump which transports H(+) ions in exchange for K(+) ions across the apical membrane of parietal cells. Uses ATP as an energy source to pump H(+) ions to the gastric lumen while transporting K(+) ion from the lumen into the cell. Remarkably generates a million-fold proton gradient across the gastric parietal cell membrane, acidifying the gastric juice down to pH 1. Within a transport cycle, the transfer of a H(+) ion across the membrane is coupled to ATP hydrolysis and is associated with a transient phosphorylation that shifts the pump conformation from inward-facing (E1) to outward-facing state (E2). The release of the H(+) ion in the stomach lumen is followed by binding of K(+) ion converting the pump conformation back to the E1 state. This is Potassium-transporting ATPase alpha chain 1 (Atp4a) from Rattus norvegicus (Rat).